Here is a 201-residue protein sequence, read N- to C-terminus: Small ribosomal subunit protein uS4c (201 aa).

Residues 20-44 (GLTSKRPRAGSDLRNQSRSGKKSQY) form a disordered region. In terms of domain architecture, S4 RNA-binding spans 89–152 (MRLDNILFRL…NSRTLVQNLL (64 aa)).

Belongs to the universal ribosomal protein uS4 family. In terms of assembly, part of the 30S ribosomal subunit. Contacts protein S5. The interaction surface between S4 and S5 is involved in control of translational fidelity.

Its subcellular location is the plastid. It is found in the chloroplast. Its function is as follows. One of the primary rRNA binding proteins, it binds directly to 16S rRNA where it nucleates assembly of the body of the 30S subunit. In terms of biological role, with S5 and S12 plays an important role in translational accuracy. This chain is Small ribosomal subunit protein uS4c (rps4), found in Arabis hirsuta (Hairy rock-cress).